The following is a 3166-amino-acid chain: Intermembrane lipid transfer protein VPS13A (3166 aa).

Positions 3–116 (FESVVVEVLN…LMETKQQELK (114 aa)) constitute a Chorein N-terminal domain. TPR repeat units lie at residues 212–245 (LFAY…ENIV) and 373–406 (LTSK…QQAE). Thr831 is subject to Phosphothreonine. At Ser835 the chain carries Phosphoserine. The FFAT motif lies at 838 to 844 (EFFDAPC). Over residues 1343–1359 (APSSANKDPETMTSGVT) the composition is skewed to polar residues. A disordered region spans residues 1343-1365 (APSSANKDPETMTSGVTSPPDHS). At Ser1410 the chain carries Phosphoserine. TPR repeat units follow at residues 1806-1840 (AIVE…TLSK) and 1999-2034 (ISVF…VPED). An SHR-BD domain is found at 2202–2447 (VAFHSPYWMV…VYYTWADPVG (246 aa)). Required for mitochondrial localization stretches follow at residues 2607–3166 (LQPH…SPRL) and 2743–3166 (EYEV…SPRL). TPR repeat units follow at residues 2716–2750 (ADLV…VSSV) and 2852–2890 (ILGL…PEEF). Positions 2945 to 3019 (PAGLREGITR…SSTFQGIKRA (75 aa)) are required for lipid droplet localization.

Belongs to the VPS13 family. Interacts (via FFAT motif) with VAPA and VAPB. Interacts with RAB7A. Interacts with XK.

It is found in the mitochondrion outer membrane. The protein resides in the endoplasmic reticulum membrane. The protein localises to the endosome membrane. Its subcellular location is the lysosome membrane. It localises to the lipid droplet. It is found in the golgi apparatus. The protein resides in the cytoplasmic vesicle. The protein localises to the secretory vesicle. Its subcellular location is the neuronal dense core vesicle. Functionally, mediates the transfer of lipids between membranes at organelle contact sites. Required for the formation or stabilization of ER-mitochondria contact sites which enable transfer of lipids between the ER and mitochondria. Negatively regulates lipid droplet size and motility. Required for efficient lysosomal protein degradation. This is Intermembrane lipid transfer protein VPS13A from Mus musculus (Mouse).